A 204-amino-acid chain; its full sequence is Small ribosomal subunit protein uS4 (204 aa).

The S4 RNA-binding domain maps to 92–156 (RRLDALVLRS…SKVPFQVARE (65 aa)).

Belongs to the universal ribosomal protein uS4 family. In terms of assembly, part of the 30S ribosomal subunit. Contacts protein S5. The interaction surface between S4 and S5 is involved in control of translational fidelity.

Functionally, one of the primary rRNA binding proteins, it binds directly to 16S rRNA where it nucleates assembly of the body of the 30S subunit. With S5 and S12 plays an important role in translational accuracy. The protein is Small ribosomal subunit protein uS4 of Streptomyces griseus subsp. griseus (strain JCM 4626 / CBS 651.72 / NBRC 13350 / KCC S-0626 / ISP 5235).